The primary structure comprises 508 residues: Light-independent protochlorophyllide reductase subunit B (508 aa).

Residue aspartate 36 coordinates [4Fe-4S] cluster. Aspartate 294 serves as the catalytic Proton donor. Position 429 to 430 (glycine 429 to methionine 430) interacts with substrate.

It belongs to the ChlB/BchB/BchZ family. In terms of assembly, protochlorophyllide reductase is composed of three subunits; ChlL, ChlN and ChlB. Forms a heterotetramer of two ChlB and two ChlN subunits. It depends on [4Fe-4S] cluster as a cofactor.

The catalysed reaction is chlorophyllide a + oxidized 2[4Fe-4S]-[ferredoxin] + 2 ADP + 2 phosphate = protochlorophyllide a + reduced 2[4Fe-4S]-[ferredoxin] + 2 ATP + 2 H2O. It functions in the pathway porphyrin-containing compound metabolism; chlorophyll biosynthesis (light-independent). Component of the dark-operative protochlorophyllide reductase (DPOR) that uses Mg-ATP and reduced ferredoxin to reduce ring D of protochlorophyllide (Pchlide) to form chlorophyllide a (Chlide). This reaction is light-independent. The NB-protein (ChlN-ChlB) is the catalytic component of the complex. In Trichormus variabilis (strain ATCC 29413 / PCC 7937) (Anabaena variabilis), this protein is Light-independent protochlorophyllide reductase subunit B.